The primary structure comprises 458 residues: tRNA modification GTPase MnmE (458 aa).

The (6S)-5-formyl-5,6,7,8-tetrahydrofolate site is built by arginine 26, glutamate 88, and arginine 127. One can recognise a TrmE-type G domain in the interval 224 to 378 (GLSTAIIGRP…IEDRINQLFF (155 aa)). K(+) is bound at residue asparagine 234. Residues 234-239 (NVGKSS), 253-259 (TDIAGTT), and 278-281 (DTAG) contribute to the GTP site. Serine 238 contributes to the Mg(2+) binding site. Residues threonine 253, isoleucine 255, and threonine 258 each coordinate K(+). Threonine 259 serves as a coordination point for Mg(2+). Lysine 458 provides a ligand contact to (6S)-5-formyl-5,6,7,8-tetrahydrofolate.

This sequence belongs to the TRAFAC class TrmE-Era-EngA-EngB-Septin-like GTPase superfamily. TrmE GTPase family. Homodimer. Heterotetramer of two MnmE and two MnmG subunits. It depends on K(+) as a cofactor.

The protein localises to the cytoplasm. Exhibits a very high intrinsic GTPase hydrolysis rate. Involved in the addition of a carboxymethylaminomethyl (cmnm) group at the wobble position (U34) of certain tRNAs, forming tRNA-cmnm(5)s(2)U34. This chain is tRNA modification GTPase MnmE, found in Streptococcus pyogenes serotype M6 (strain ATCC BAA-946 / MGAS10394).